The following is a 330-amino-acid chain: Tryptophan--tRNA ligase (330 aa).

Residues 10–12 (QAT) and 18–19 (GN) each bind ATP. A 'HIGH' region motif is present at residues 11-19 (ATGSLHLGN). Asp-134 serves as a coordination point for L-tryptophan. ATP-binding positions include 146–148 (GED), Ile-186, and 195–199 (KMSKS). The short motif at 195 to 199 (KMSKS) is the 'KMSKS' region element.

This sequence belongs to the class-I aminoacyl-tRNA synthetase family. As to quaternary structure, homodimer.

The protein resides in the cytoplasm. The enzyme catalyses tRNA(Trp) + L-tryptophan + ATP = L-tryptophyl-tRNA(Trp) + AMP + diphosphate + H(+). In terms of biological role, catalyzes the attachment of tryptophan to tRNA(Trp). The protein is Tryptophan--tRNA ligase of Rickettsia conorii (strain ATCC VR-613 / Malish 7).